The following is a 92-amino-acid chain: cAMP-dependent protein kinase inhibitor beta (92 aa).

The tract at residues 1–26 (MGGGTSPEAQQDSVMRTDSSEMTDVE) is disordered. The segment covering 7 to 26 (PEAQQDSVMRTDSSEMTDVE) has biased composition (polar residues). Phosphoserine is present on S56. Residues 70–82 (EDAKTKNEEKDQG) are compositionally biased toward basic and acidic residues. The tract at residues 70-92 (EDAKTKNEEKDQGQPKTPLNEGK) is disordered.

The protein belongs to the PKI family.

Extremely potent competitive inhibitor of cAMP-dependent protein kinase activity, this protein interacts with the catalytic subunit of the enzyme after the cAMP-induced dissociation of its regulatory chains. The protein is cAMP-dependent protein kinase inhibitor beta (Pkib) of Mus musculus (Mouse).